We begin with the raw amino-acid sequence, 292 residues long: NAD kinase (292 aa).

Aspartate 73 acts as the Proton acceptor in catalysis. Residues aspartate 73–glycine 74, asparagine 147–glutamate 148, histidine 158, arginine 175, aspartate 177, threonine 188–serine 193, and glutamine 247 each bind NAD(+).

Belongs to the NAD kinase family. Requires a divalent metal cation as cofactor.

It is found in the cytoplasm. The catalysed reaction is NAD(+) + ATP = ADP + NADP(+) + H(+). Involved in the regulation of the intracellular balance of NAD and NADP, and is a key enzyme in the biosynthesis of NADP. Catalyzes specifically the phosphorylation on 2'-hydroxyl of the adenosine moiety of NAD to yield NADP. This chain is NAD kinase, found in Erwinia tasmaniensis (strain DSM 17950 / CFBP 7177 / CIP 109463 / NCPPB 4357 / Et1/99).